Here is a 673-residue protein sequence, read N- to C-terminus: Capsid protein (673 aa).

Positions 575–595 (NLPTDSSLESDSDSEPAPKKK) are disordered.

This sequence belongs to the anelloviridae capsid protein family.

The protein resides in the virion. Its function is as follows. Self-assembles to form an icosahedral capsid with a T=1 symmetry, about 30 nm in diameter, and consisting of 60 capsid proteins. The capsid encapsulates the genomic DNA. Capsid protein is involved in attachment and entry into the host cell. The polypeptide is Capsid protein (Homo sapiens (Human)).